Reading from the N-terminus, the 628-residue chain is Alpha-L-arabinofuranosidase A (628 aa).

Positions 1–25 (MVAFSALSGVSAVSLLLSLVQNAHG) are cleaved as a signal peptide. N36, N51, N74, N152, N171, N260, N359, N440, N493, and N610 each carry an N-linked (GlcNAc...) asparagine glycan.

The protein belongs to the glycosyl hydrolase 51 family.

The catalysed reaction is Hydrolysis of terminal non-reducing alpha-L-arabinofuranoside residues in alpha-L-arabinosides.. Its pathway is glycan metabolism; L-arabinan degradation. Its function is as follows. Acts only on small linear 1,5-alpha-linked L-arabinofuranosyl oligosaccharides. This Aspergillus niger protein is Alpha-L-arabinofuranosidase A (abfA).